A 310-amino-acid polypeptide reads, in one-letter code: Junctional adhesion molecule C (310 aa).

An N-terminal signal peptide occupies residues 1–29 (MALSRRLRLRLYARLPDFFLLLLFRGCMI). Topologically, residues 30–241 (EAVNLKSSNR…GQDMEVYDLN (212 aa)) are extracellular. An Ig-like V-type domain is found at 35 to 127 (KSSNRNPVVH…VALNDRKEVD (93 aa)). Intrachain disulfides connect Cys53–Cys115 and Cys160–Cys219. Asn104 and Asn192 each carry an N-linked (GlcNAc...) asparagine glycan. Residues 139–236 (PVTPVCRIPA…AARCEGQDME (98 aa)) form the Ig-like C2-type domain. A helical membrane pass occupies residues 242-262 (IAGIIGGVLVVLIVLAVITMG). Residues 263 to 310 (ICCAYRRGCFISSKQDGESYKSPGKHDGVNYIRTSEEGDFRHKSSFVI) lie on the Cytoplasmic side of the membrane. Residues Cys264 and Cys265 are each lipidated (S-palmitoyl cysteine).

It belongs to the immunoglobulin superfamily. In terms of assembly, interacts with ITGAM. Interacts with GORASP2. Post-translationally, proteolytically cleaved from endothelial cells surface into a soluble form by ADAM10 and ADAM17; the release of soluble JAM3 is increased by pro-inflammatory factors. N-glycosylated. In terms of processing, S-palmitoylated by ZDHHC7. S-palmitoylation promotes expression at tight junctions. Colocalizes with Jam2 near the lumen of seminiferous tubulues. Detected at junctional plaques that correspond to cell-cell contacts between spermatids and Sertoli cells. Detected on endothelial cells, in brain vessels and kidney glomeruli (at protein level). Detected in heart, lung, liver, kidney, testis, thymus, lymph node and Peyer patch. Endothelial cells.

Its subcellular location is the cell membrane. It localises to the cell junction. The protein localises to the desmosome. The protein resides in the tight junction. It is found in the secreted. Junctional adhesion protein that mediates heterotypic cell-cell interactions with its cognate receptor JAM2 to regulate different cellular processes. Plays a role in homing and mobilization of hematopoietic stem and progenitor cells within the bone marrow. At the surface of bone marrow stromal cells, it contributes to the retention of the hematopoietic stem and progenitor cells expressing JAM3. Plays a central role in leukocytes extravasation by facilitating transmigration through the endothelium. Plays a role in spermatogenesis where JAM2 and JAM3, which are respectively expressed by Sertoli and germ cells, mediate an interaction between both cell types and play an essential role in the anchorage of germ cells onto Sertoli cells and the assembly of cell polarity complexes during spermatid differentiation. Also functions as a counter-receptor for ITGAM, mediating leukocyte-platelet interactions and is involved in the regulation of transepithelial migration of polymorphonuclear neutrophils (PMN). Plays a role in angiogenesis. Plays a role in the regulation of cell migration. During myogenesis, it is involved in myocyte fusion. Functionally, promotes chemotaxis of vascular endothelial cells and stimulates angiogenesis. This chain is Junctional adhesion molecule C (Jam3), found in Mus musculus (Mouse).